A 319-amino-acid polypeptide reads, in one-letter code: 3'-5' exoribonuclease YhaM (319 aa).

Positions E12–T90 form a DNA-binding region, OB. An HD domain is found at H163–K279.

The protein belongs to the YhaM family.

Its function is as follows. Shows a 3'-5' exoribonuclease activity. This is 3'-5' exoribonuclease YhaM from Shouchella clausii (strain KSM-K16) (Alkalihalobacillus clausii).